Reading from the N-terminus, the 407-residue chain is MGTTRVCSEVSSGSSKSLSQSLTVSTSTTETVNGFHEFKICGYSLAKGVGVGKYVASDTFMVGGYSWAIYFYPDGKSPEDNSSYVSLFIALASEGADVRALFELTLVDQSGNGKHKVHSHFGRALDSGPYTLKYRGSMWGYKRFFRRSSLESSDYLKENSLLVRCRVGVVKSVTEGPRYYNIPVPVSNLGQQLGNLLESGKGCDVVFQVDGETFNAHKLVLATRSPVFNAQLFGPLGDRNTKCITIEDMEAPIFKVLLHFIYWDELPDMQELIGTDSTLASTLVAQHLLAAADRYALERLKAICESKLCEGVAINTVATTLALAEQHHCLQLKAVCLKFVALPENLKAVMQTDGFDYLKESCPSLLTELLQYVARLSEHSVIVSGHRKEIFADGCDASGRRVKPRLH.

One can recognise an MATH domain in the interval 33-167; sequence NGFHEFKICG…ENSLLVRCRV (135 aa). Residues 203–270 enclose the BTB domain; sequence CDVVFQVDGE…IYWDELPDMQ (68 aa).

This sequence belongs to the Tdpoz family. Homodimer or heterodimer with BPM3, BPM5 and BPM6. Interacts with CUL3A and CUL3B. Interacts with RAP2-4 and RAP2-13. Binds to MYB56 at the promoter of FLOWERING LOCUS T (FT). In terms of tissue distribution, ubiquitous.

It is found in the nucleus. The protein operates within protein modification; protein ubiquitination. Its function is as follows. May act as a substrate-specific adapter of an E3 ubiquitin-protein ligase complex (CUL3-RBX1-BTB) which mediates the ubiquitination and subsequent proteasomal degradation of target proteins. This chain is BTB/POZ and MATH domain-containing protein 1 (BPM1), found in Arabidopsis thaliana (Mouse-ear cress).